A 93-amino-acid chain; its full sequence is uncharacterized protein (93 aa).

A helical membrane pass occupies residues 12–32 (VVGGLSFWTFSAGLIMIVNAL). A disordered region spans residues 47 to 66 (TANANGSDDDNENKNNSYRS).

The protein localises to the cell membrane. This is an uncharacterized protein from Mycoplasma genitalium (strain ATCC 33530 / DSM 19775 / NCTC 10195 / G37) (Mycoplasmoides genitalium).